Consider the following 234-residue polypeptide: 7-carboxy-7-deazaguanine synthase (234 aa).

The segment at 1–28 (MPLNCDTKTAGEISSSIPSGSGSHQPAA) is disordered. Positions 13–23 (ISSSIPSGSGS) are enriched in low complexity. Residues 42–44 (LQG) and Arg57 each bind substrate. Residues 48-234 (TSGYPTIFIR…LQLHKFIGLP (187 aa)) form the Radical SAM core domain. [4Fe-4S] cluster-binding residues include Cys61, Cys65, and Cys68. Mg(2+) is bound at residue Thr70. Thr100 contributes to the substrate binding site. Gly102 contacts S-adenosyl-L-methionine. A substrate-binding site is contributed by Pro234.

The protein belongs to the radical SAM superfamily. 7-carboxy-7-deazaguanine synthase family. In terms of assembly, homodimer. It depends on [4Fe-4S] cluster as a cofactor. The cofactor is S-adenosyl-L-methionine. Requires Mg(2+) as cofactor.

It catalyses the reaction 6-carboxy-5,6,7,8-tetrahydropterin + H(+) = 7-carboxy-7-deazaguanine + NH4(+). It functions in the pathway purine metabolism; 7-cyano-7-deazaguanine biosynthesis. Functionally, catalyzes the complex heterocyclic radical-mediated conversion of 6-carboxy-5,6,7,8-tetrahydropterin (CPH4) to 7-carboxy-7-deazaguanine (CDG), a step common to the biosynthetic pathways of all 7-deazapurine-containing compounds. The sequence is that of 7-carboxy-7-deazaguanine synthase from Methanospirillum hungatei JF-1 (strain ATCC 27890 / DSM 864 / NBRC 100397 / JF-1).